We begin with the raw amino-acid sequence, 373 residues long: Malate dehydrogenase, mitochondrial (373 aa).

NAD(+) contacts are provided by residues 69–75 and Asp95; that span reads GAAGGIG. The substrate site is built by Arg141 and Arg147. NAD(+) is bound by residues Asn154 and 177–179; that span reads ISN. Substrate-binding residues include Asn179 and Arg213. The active-site Proton acceptor is His237. Position 288 (Met288) interacts with NAD(+).

The protein belongs to the LDH/MDH superfamily. MDH type 1 family. As to quaternary structure, homodimer.

The protein resides in the mitochondrion matrix. The enzyme catalyses (S)-malate + NAD(+) = oxaloacetate + NADH + H(+). The sequence is that of Malate dehydrogenase, mitochondrial from Chlamydomonas reinhardtii (Chlamydomonas smithii).